We begin with the raw amino-acid sequence, 549 residues long: Cytoplasmic trehalase (549 aa).

Residues Arg-168, 175–176 (WD), Asn-212, 221–223 (RSQ), 292–294 (RDE), and Gly-324 contribute to the substrate site. Active-site proton donor/acceptor residues include Asp-326 and Glu-509. Glu-525 is a binding site for substrate.

It belongs to the glycosyl hydrolase 37 family. Monomer.

The protein localises to the cytoplasm. It catalyses the reaction alpha,alpha-trehalose + H2O = alpha-D-glucose + beta-D-glucose. Its pathway is glycan degradation; trehalose degradation; D-glucose from alpha,alpha-trehalose: step 1/1. Functionally, hydrolyzes trehalose to glucose. Could be involved, in cells returning to low osmolarity conditions, in the utilization of the accumulated cytoplasmic trehalose, which was synthesized in response to high osmolarity. The sequence is that of Cytoplasmic trehalase from Salmonella choleraesuis (strain SC-B67).